Reading from the N-terminus, the 121-residue chain is Large ribosomal subunit protein bL21 (121 aa).

Belongs to the bacterial ribosomal protein bL21 family. As to quaternary structure, part of the 50S ribosomal subunit. Contacts protein L20.

In terms of biological role, this protein binds to 23S rRNA in the presence of protein L20. This Synechococcus sp. (strain CC9605) protein is Large ribosomal subunit protein bL21.